A 78-amino-acid polypeptide reads, in one-letter code: UPF0349 protein BH3414 (78 aa).

It belongs to the UPF0349 family.

This chain is UPF0349 protein BH3414, found in Halalkalibacterium halodurans (strain ATCC BAA-125 / DSM 18197 / FERM 7344 / JCM 9153 / C-125) (Bacillus halodurans).